The primary structure comprises 268 residues: Chymotrypsin-C (268 aa).

An N-terminal signal peptide occupies residues 1–16; sequence MLGITVLAAILACASC. Positions 17–29 are cleaved as a propeptide — activation peptide; sequence CGNPAFPPNLSTR. Disulfide bonds link Cys17–Cys141, Cys59–Cys75, Cys155–Cys222, Cys186–Cys202, and Cys212–Cys243. Asn25 is a glycosylation site (N-linked (GlcNAc...) asparagine). Positions 30–267 constitute a Peptidase S1 domain; sequence VVGGEDAVPN…YNDWINEKIQ (238 aa). Residue His74 is the Charge relay system of the active site. The N-linked (GlcNAc...) asparagine glycan is linked to Asn90. The active-site Charge relay system is the Asp121. Residue Ser216 is the Charge relay system of the active site.

The protein belongs to the peptidase S1 family. Elastase subfamily. Pancreas.

It catalyses the reaction Preferential cleavage: Leu-|-Xaa, Tyr-|-Xaa, Phe-|-Xaa, Met-|-Xaa, Trp-|-Xaa, Gln-|-Xaa, Asn-|-Xaa.. Its function is as follows. Regulates activation and degradation of trypsinogens and procarboxypeptidases by targeting specific cleavage sites within their zymogen precursors. Has chymotrypsin-type protease activity and hypocalcemic activity. Cleaves TRY4 and TRY5 and thereby inhibits their autoactivation. The protein is Chymotrypsin-C (Ctrc) of Rattus norvegicus (Rat).